Here is a 440-residue protein sequence, read N- to C-terminus: Nuclear fusion protein BIK1 (440 aa).

The CAP-Gly domain occupies 26–69 (GPVDTKAGMFAGVDLLANIGKNDGSFMGKKYFQTEYPQSGLFIQ). 2 positions are modified to phosphoserine: Ser-95 and Ser-110. Positions 108 to 157 (QFSPMDDPKSPTPMRSFRITSRHSGNQQSMDQEASDHHQQQEFGYDNRED) are disordered. Residues 125–139 (RITSRHSGNQQSMDQ) show a composition bias toward polar residues. Residues 141–157 (ASDHHQQQEFGYDNRED) are compositionally biased toward basic and acidic residues. Positions 190–397 (NSSEVTIELR…AQAQTAVESL (208 aa)) form a coiled coil. Residues 416-429 (CEHCDTMGHNTAEC) carry the CCHC-box motif.

The protein resides in the cytoplasm. The protein localises to the cytoskeleton. It localises to the microtubule organizing center. It is found in the spindle pole body. Its subcellular location is the spindle. In terms of biological role, required for nuclear fusion, chromosome disjunction, and nuclear segregation during mitosis. Probably required for the formation or stabilization of microtubules during mitosis and for spindle pole body fusion during conjugation. This Saccharomyces cerevisiae (strain ATCC 204508 / S288c) (Baker's yeast) protein is Nuclear fusion protein BIK1 (BIK1).